Consider the following 761-residue polypeptide: Neutral ceramidase (761 aa).

Over 1–11 (MAKRTFSSLEA) the chain is Cytoplasmic. A helical; Signal-anchor for type II membrane protein transmembrane segment spans residues 12-32 (FLIFLLVMMTAITVALLTLLF). The Lumenal portion of the chain corresponds to 33–761 (VTSGTIENHK…ISSPFEIVTT (729 aa)). Residues 43-76 (DSGNHWVSTTQGPTTTQSSPTTQTPTTQTPDLPP) form a disordered region. Low complexity predominate over residues 50-76 (STTQGPTTTQSSPTTQTPTTQTPDLPP). Threonine 51, threonine 52, threonine 56, threonine 57, and threonine 58 each carry an O-linked (GalNAc...) threonine glycan. Serine 60 and serine 61 each carry an O-linked (GalNAc...) serine glycan. Residues threonine 63, threonine 64, threonine 66, threonine 68, threonine 69, and threonine 71 are each glycosylated (O-linked (GalNAc...) threonine). Leucine 115 is a Ca(2+) binding site. Histidine 175 is a Zn(2+) binding site. Asparagine 198 carries N-linked (GlcNAc...) asparagine glycosylation. Histidine 284 serves as a coordination point for Zn(2+). The active-site Nucleophile is the serine 335. 2 disulfide bridges follow: cysteine 343-cysteine 357 and cysteine 350-cysteine 365. Residues asparagine 412 and asparagine 449 are each glycosylated (N-linked (GlcNAc...) asparagine). Cysteine 429 and cysteine 479 are disulfide-bonded. Zn(2+) is bound by residues glutamate 521 and tyrosine 560. Aspartate 693, serine 695, and threonine 698 together coordinate Ca(2+). A required for correct folding and localization region spans residues 751 to 761 (GISSPFEIVTT).

The protein belongs to the neutral ceramidase family. Zn(2+) serves as cofactor. In terms of processing, proteolytic cleavage of the N-terminus removes the signal-anchor and produces a soluble form of the protein. N-glycosylated. Required for enzyme activity. Post-translationally, O-glycosylated. Required to retain it as a type II membrane protein at the cell surface. In terms of processing, phosphorylated. May prevent ubiquitination and subsequent degradation. Ubiquitinated, leading to its degradation by the proteasome. Ubiquitination is triggered by nitric oxide. As to expression, highly expressed in brain, kidney and heart. Expressed at lower level in other tissues such as liver. Expressed in intestine, kidney and liver (at protein level). Localizes in the epithelia of the jejunum and ileum.

The protein resides in the cell membrane. It localises to the membrane raft. The protein localises to the membrane. It is found in the caveola. Its subcellular location is the golgi apparatus membrane. The protein resides in the mitochondrion. It localises to the secreted. The protein localises to the extracellular exosome. It catalyses the reaction an N-acylsphing-4-enine + H2O = sphing-4-enine + a fatty acid. It carries out the reaction N-hexadecanoylsphing-4-enine + H2O = sphing-4-enine + hexadecanoate. The enzyme catalyses N-tetradecanoylsphing-4-enine + H2O = tetradecanoate + sphing-4-enine. The catalysed reaction is N-(9Z-octadecenoyl)-sphing-4-enine + H2O = sphing-4-enine + (9Z)-octadecenoate. It catalyses the reaction N-(15Z-tetracosenoyl)-sphing-4-enine + H2O = (15Z)-tetracosenoate + sphing-4-enine. It carries out the reaction N-octanoylsphing-4-enine + H2O = octanoate + sphing-4-enine. The enzyme catalyses N-dodecanoylsphing-4-enine + H2O = dodecanoate + sphing-4-enine. The catalysed reaction is N-(hexanoyl)sphing-4-enine + H2O = hexanoate + sphing-4-enine. It catalyses the reaction N-octadecanoylsphing-4-enine + H2O = sphing-4-enine + octadecanoate. It carries out the reaction sphinganine + hexadecanoate = N-hexadecanoylsphinganine + H2O. The enzyme catalyses N-(octadecanoyl)-sphinganine + H2O = sphinganine + octadecanoate. It functions in the pathway lipid metabolism; sphingolipid metabolism. With respect to regulation, the reverse reaction is inhibited by Zn(2+) and Cu(2+). Inhibited by cardiolipin and phosphatidic acid. Plasma membrane ceramidase that hydrolyzes sphingolipid ceramides into sphingosine and free fatty acids at neutral pH. Ceramides, sphingosine, and its phosphorylated form sphingosine-1-phosphate are bioactive lipids that mediate cellular signaling pathways regulating several biological processes including cell proliferation, apoptosis and differentiation. Also catalyzes the reverse reaction allowing the synthesis of ceramides from fatty acids and sphingosine. Together with sphingomyelinase, participates in the production of sphingosine and sphingosine-1-phosphate from the degradation of sphingomyelin, a sphingolipid enriched in the plasma membrane of cells. Also participates in the hydrolysis of ceramides from the extracellular milieu allowing the production of sphingosine-1-phosphate inside and outside cells. This is the case for instance with the digestion of dietary sphingolipids in the intestinal tract. The protein is Neutral ceramidase (Asah2) of Rattus norvegicus (Rat).